The primary structure comprises 417 residues: NADH-quinone oxidoreductase subunit D (417 aa).

Belongs to the complex I 49 kDa subunit family. In terms of assembly, NDH-1 is composed of 14 different subunits. Subunits NuoB, C, D, E, F, and G constitute the peripheral sector of the complex.

It is found in the cell inner membrane. The enzyme catalyses a quinone + NADH + 5 H(+)(in) = a quinol + NAD(+) + 4 H(+)(out). Functionally, NDH-1 shuttles electrons from NADH, via FMN and iron-sulfur (Fe-S) centers, to quinones in the respiratory chain. The immediate electron acceptor for the enzyme in this species is believed to be ubiquinone. Couples the redox reaction to proton translocation (for every two electrons transferred, four hydrogen ions are translocated across the cytoplasmic membrane), and thus conserves the redox energy in a proton gradient. This is NADH-quinone oxidoreductase subunit D from Acidovorax sp. (strain JS42).